Consider the following 311-residue polypeptide: Olfactory receptor 14I1 (311 aa).

Residues Met-1 to Ala-26 lie on the Extracellular side of the membrane. Asn-3 is a glycosylation site (N-linked (GlcNAc...) asparagine). Residues Gly-27–Ile-47 form a helical membrane-spanning segment. Residues Thr-48–Thr-55 are Cytoplasmic-facing. A helical membrane pass occupies residues Pro-56–Val-76. Topologically, residues Pro-77–Tyr-92 are extracellular. The helical transmembrane segment at Leu-93–Leu-113 threads the bilayer. The cysteines at positions 95 and 188 are disulfide-linked. The Cytoplasmic portion of the chain corresponds to Thr-114–Gln-141. Residues Met-142–Phe-162 traverse the membrane as a helical segment. At Arg-163–Glu-189 the chain is on the extracellular side. The helical transmembrane segment at Val-190 to Ile-210 threads the bilayer. The Cytoplasmic portion of the chain corresponds to Leu-211–Pro-241. Residues Gln-242 to Ala-262 form a helical membrane-spanning segment. Residues Lys-263–Asp-269 are Extracellular-facing. The chain crosses the membrane as a helical span at residues Leu-270–Leu-290. Over Arg-291 to Lys-311 the chain is Cytoplasmic.

The protein belongs to the G-protein coupled receptor 1 family.

It localises to the cell membrane. Its function is as follows. Odorant receptor. The sequence is that of Olfactory receptor 14I1 (OR14I1) from Homo sapiens (Human).